The primary structure comprises 141 residues: VLSANDKANVKAAWDKVGGQAANYGAEALERTFASFPTTKTYFPHYDLSPGSAQVKAHGKKVADALTKAVGSMDDLPGALSALSDLHAHKLRVDPVNFKLLSHCLLVTLAAHHPADFTPAVHASLDKFLASVSTVLTSKYR.

One can recognise a Globin domain in the interval 1–141; the sequence is VLSANDKANV…VSTVLTSKYR (141 aa). The residue at position 3 (serine 3) is a Phosphoserine. An N6-succinyllysine mark is found at lysine 7 and lysine 11. Residue lysine 16 is modified to N6-acetyllysine; alternate. The residue at position 16 (lysine 16) is an N6-succinyllysine; alternate. Tyrosine 24 is subject to Phosphotyrosine. Serine 35 bears the Phosphoserine mark. Lysine 40 is subject to N6-succinyllysine. Serine 49 carries the post-translational modification Phosphoserine. Histidine 58 is an O2 binding site. Heme b is bound at residue histidine 87. Phosphoserine is present on serine 102. At threonine 108 the chain carries Phosphothreonine. Phosphoserine is present on residues serine 124 and serine 131. Residues threonine 134 and threonine 137 each carry the phosphothreonine modification. Residue serine 138 is modified to Phosphoserine.

This sequence belongs to the globin family. In terms of assembly, heterotetramer of two alpha chains and two beta chains. As to expression, red blood cells.

Functionally, involved in oxygen transport from the lung to the various peripheral tissues. Hemopressin acts as an antagonist peptide of the cannabinoid receptor CNR1. Hemopressin-binding efficiently blocks cannabinoid receptor CNR1 and subsequent signaling. This chain is Hemoglobin subunit alpha (HBA), found in Suncus murinus (Asian house shrew).